An 81-amino-acid chain; its full sequence is Acyl carrier protein (81 aa).

The Carrier domain maps to 2 to 80 (ASKDEILAGL…DAVNFIDNAQ (79 aa)). At S40 the chain carries O-(pantetheine 4'-phosphoryl)serine.

Belongs to the acyl carrier protein (ACP) family. Post-translationally, 4'-phosphopantetheine is transferred from CoA to a specific serine of apo-ACP by AcpS. This modification is essential for activity because fatty acids are bound in thioester linkage to the sulfhydryl of the prosthetic group.

The protein localises to the cytoplasm. Its pathway is lipid metabolism; fatty acid biosynthesis. Its function is as follows. Carrier of the growing fatty acid chain in fatty acid biosynthesis. The polypeptide is Acyl carrier protein (Kocuria rhizophila (strain ATCC 9341 / DSM 348 / NBRC 103217 / DC2201)).